Consider the following 186-residue polypeptide: dCTP deaminase (186 aa).

106–111 serves as a coordination point for dCTP; that stretch reads KSTYAR. Glutamate 132 serves as the catalytic Proton donor/acceptor. Positions 151, 166, and 176 each coordinate dCTP.

Belongs to the dCTP deaminase family. In terms of assembly, homotrimer.

The catalysed reaction is dCTP + H2O + H(+) = dUTP + NH4(+). The protein operates within pyrimidine metabolism; dUMP biosynthesis; dUMP from dCTP (dUTP route): step 1/2. Catalyzes the deamination of dCTP to dUTP. This is dCTP deaminase from Nautilia profundicola (strain ATCC BAA-1463 / DSM 18972 / AmH).